We begin with the raw amino-acid sequence, 298 residues long: Lipoyl synthase (298 aa).

Cysteine 37, cysteine 42, cysteine 48, cysteine 63, cysteine 67, cysteine 70, and serine 277 together coordinate [4Fe-4S] cluster. One can recognise a Radical SAM core domain in the interval 49-266; the sequence is WGGGTATVML…KTLAESYGFL (218 aa).

Belongs to the radical SAM superfamily. Lipoyl synthase family. [4Fe-4S] cluster serves as cofactor.

It is found in the cytoplasm. It catalyses the reaction [[Fe-S] cluster scaffold protein carrying a second [4Fe-4S](2+) cluster] + N(6)-octanoyl-L-lysyl-[protein] + 2 oxidized [2Fe-2S]-[ferredoxin] + 2 S-adenosyl-L-methionine + 4 H(+) = [[Fe-S] cluster scaffold protein] + N(6)-[(R)-dihydrolipoyl]-L-lysyl-[protein] + 4 Fe(3+) + 2 hydrogen sulfide + 2 5'-deoxyadenosine + 2 L-methionine + 2 reduced [2Fe-2S]-[ferredoxin]. It participates in protein modification; protein lipoylation via endogenous pathway; protein N(6)-(lipoyl)lysine from octanoyl-[acyl-carrier-protein]: step 2/2. Catalyzes the radical-mediated insertion of two sulfur atoms into the C-6 and C-8 positions of the octanoyl moiety bound to the lipoyl domains of lipoate-dependent enzymes, thereby converting the octanoylated domains into lipoylated derivatives. The chain is Lipoyl synthase from Myxococcus xanthus (strain DK1622).